The sequence spans 252 residues: Imidazole glycerol phosphate synthase subunit HisF (252 aa).

Catalysis depends on residues aspartate 11 and aspartate 130.

Belongs to the HisA/HisF family. In terms of assembly, heterodimer of HisH and HisF.

The protein localises to the cytoplasm. The catalysed reaction is 5-[(5-phospho-1-deoxy-D-ribulos-1-ylimino)methylamino]-1-(5-phospho-beta-D-ribosyl)imidazole-4-carboxamide + L-glutamine = D-erythro-1-(imidazol-4-yl)glycerol 3-phosphate + 5-amino-1-(5-phospho-beta-D-ribosyl)imidazole-4-carboxamide + L-glutamate + H(+). It participates in amino-acid biosynthesis; L-histidine biosynthesis; L-histidine from 5-phospho-alpha-D-ribose 1-diphosphate: step 5/9. Its function is as follows. IGPS catalyzes the conversion of PRFAR and glutamine to IGP, AICAR and glutamate. The HisF subunit catalyzes the cyclization activity that produces IGP and AICAR from PRFAR using the ammonia provided by the HisH subunit. The chain is Imidazole glycerol phosphate synthase subunit HisF from Lacticaseibacillus casei (strain BL23) (Lactobacillus casei).